The sequence spans 412 residues: uncharacterized protein (412 aa).

His-49 is a Zn(2+) binding site. Glu-52 serves as the catalytic Proton acceptor. Zn(2+) is bound by residues His-53 and Glu-129.

It belongs to the peptidase M16 family. The cofactor is Zn(2+).

This is an uncharacterized protein from Rickettsia typhi (strain ATCC VR-144 / Wilmington).